Here is a 193-residue protein sequence, read N- to C-terminus: dCTP deaminase (193 aa).

DCTP-binding positions include Arg110 to Arg115, Asp128, Val136 to Glu138, Tyr171, Lys178, and Gln182. Glu138 (proton donor/acceptor) is an active-site residue. A disordered region spans residues Arg169–Asp193.

It belongs to the dCTP deaminase family. Homotrimer.

The enzyme catalyses dCTP + H2O + H(+) = dUTP + NH4(+). The protein operates within pyrimidine metabolism; dUMP biosynthesis; dUMP from dCTP (dUTP route): step 1/2. In terms of biological role, catalyzes the deamination of dCTP to dUTP. This Escherichia coli O1:K1 / APEC protein is dCTP deaminase.